A 498-amino-acid polypeptide reads, in one-letter code: MASQGTKRSYEQMETDGERQNATEIRASVGKMIDGIGRFYIQMCTELKLSDYEGRLIQNSLTIERMVLSAFDERRNKYLEEHPSAGKDPKKTGGPIYKRVDGKWMRELVLYDKGEIRRIWRQANNGDDATAGLTHMMIWHSNLNDTTYQRTRALVRTGMDPRMCSLMQGSTLPRRSGAAGAAVKGVGTMVMELIRMIKRGINDRNFWRGENGRKTRSAYERMCNILKGKFQTAAQRAMMDQVRESRNPGNAEIEDLIFLARSALILRGSVAHKSCLPACVYGPAVASGYDFEKEGYSLVGIDPFKLLQNSQVYSLIRPNENPAHKSQLVWMACNSAAFEDLRVLSFIRGTKVSPRGKLSTRGVQIASNENMDAMESSTLELRSRYWAIRTRSGGNTNQQRASAGQISVQPAFSVQRNLPFDKPTIMAAFTGNTEGRTSDMRAEIIRMMEGAKPEEMSFQGRGVFELSDEKAANPIVPSFDMSNEGSYFFGDNAEEYDN.

The short motif at 1-18 is the Unconventional nuclear localization signal element; that stretch reads MASQGTKRSYEQMETDGE. The disordered stretch occupies residues 1–21; sequence MASQGTKRSYEQMETDGERQN. Residues 8-21 are compositionally biased toward basic and acidic residues; the sequence is RSYEQMETDGERQN. The short motif at 198–216 is the Bipartite nuclear localization signal element; sequence KRGINDRNFWRGENGRKTR.

This sequence belongs to the influenza viruses nucleoprotein family. In terms of assembly, homomultimerizes to form the nucleocapsid. May bind host exportin-1/XPO1. Binds to viral genomic RNA. Protein-RNA contacts are mediated by a combination of electrostatic interactions between positively charged residues and the phosphate backbone and planar interactions between aromatic side chains and bases. Post-translationally, late in virus-infected cells, may be cleaved from a 56-kDa protein to a 53-kDa protein by a cellular caspase. This cleavage might be a marker for the onset of apoptosis in infected cells or have a specific function in virus host interaction.

The protein localises to the virion. The protein resides in the host nucleus. In terms of biological role, encapsidates the negative strand viral RNA, protecting it from nucleases. The encapsidated genomic RNA is termed the ribonucleoprotein (RNP) and serves as template for transcription and replication. The RNP needs to be localized in the host nucleus to start an infectious cycle, but is too large to diffuse through the nuclear pore complex. NP comprises at least 2 nuclear localization signals that are responsible for the active RNP import into the nucleus through cellular importin alpha/beta pathway. Later in the infection, nclear export of RNPs are mediated through viral proteins NEP interacting with M1 which binds nucleoproteins. It is possible that nucleoprotein binds directly host exportin-1/XPO1 and plays an active role in RNPs nuclear export. M1 interaction with RNP seems to hide nucleoprotein's nuclear localization signals. Soon after a virion infects a new cell, M1 dissociates from the RNP under acidification of the virion driven by M2 protein. Dissociation of M1 from RNP unmasks nucleoprotein's nuclear localization signals, targeting the RNP to the nucleus. The polypeptide is Nucleoprotein (Aves (whales)).